Here is a 198-residue protein sequence, read N- to C-terminus: DNA damage response protein D (198 aa).

The tract at residues 124–198 (SAAPTDPAGP…SEAGENTPAA (75 aa)) is disordered. Basic and acidic residues predominate over residues 136 to 180 (PGTDRAERTAAERTASERATHDRASTERPARPRRSAEPEAVRTED).

Its function is as follows. Appears to contribute to D.radiodurans capacity to survive exposure to ionizing radiation. May play a role in DNA repair and genome reconstitution. The chain is DNA damage response protein D (ddrD) from Deinococcus radiodurans (strain ATCC 13939 / DSM 20539 / JCM 16871 / CCUG 27074 / LMG 4051 / NBRC 15346 / NCIMB 9279 / VKM B-1422 / R1).